The sequence spans 1342 residues: Putative aldehyde oxidase-like protein (1342 aa).

The disordered stretch occupies residues 1 to 23; it reads MSDCNSGGGERRPNARATDAPPV. Residues 221–408 form the FAD-binding PCMH-type domain; the sequence is ISSPREGWYC…LSIFIPHWAS (188 aa).

Belongs to the xanthine dehydrogenase family.

This Oryza sativa subsp. japonica (Rice) protein is Putative aldehyde oxidase-like protein.